The chain runs to 364 residues: MVINFAAGPAKLPEEVLKEVQENLVNCNGSGISVMEMSHRSSNYAKIHDATISDLRELLNVPSNYKILLMQGGGTGQFAAVALNLIGKTGTADYVITGSWSAKAAKEAAQYGTVNAVLPKLAKYTTVPRQETWKLDPNASYVYYCDNETVEGVEFDFVPEVPAGVPLVADMSSNFLSRPFDVSKFGVIYAGAQKNIGPAGTTVIIVRDDLIGKHLKITPSILNFEQMDKNNSLLNTPPTFGIYVMGLVFKWIKRNGGVAGMAKLAAAKSKLIYDTINQSNGFYYCPVDVNVRSRMNVPFRIGSASGDDALEKEFLSKAEAEGMIQLKGHRSVGGIRASLYNAVTLAETQQLANLMLAFYKNNKN.

R40 serves as a coordination point for L-glutamate. Pyridoxal 5'-phosphate contacts are provided by residues 74–75 (GT), W100, T149, D170, and Q193. K194 carries the post-translational modification N6-(pyridoxal phosphate)lysine. 235-236 (NT) is a pyridoxal 5'-phosphate binding site.

Belongs to the class-V pyridoxal-phosphate-dependent aminotransferase family. SerC subfamily. Homodimer. It depends on pyridoxal 5'-phosphate as a cofactor. As to expression, expressed in ovary and head.

It carries out the reaction O-phospho-L-serine + 2-oxoglutarate = 3-phosphooxypyruvate + L-glutamate. It catalyses the reaction 4-(phosphooxy)-L-threonine + 2-oxoglutarate = (R)-3-hydroxy-2-oxo-4-phosphooxybutanoate + L-glutamate. It functions in the pathway amino-acid biosynthesis; L-serine biosynthesis; L-serine from 3-phospho-D-glycerate: step 2/3. Its pathway is cofactor biosynthesis; pyridoxine 5'-phosphate biosynthesis; pyridoxine 5'-phosphate from D-erythrose 4-phosphate: step 3/5. In terms of biological role, catalyzes the reversible conversion of 3-phosphohydroxypyruvate to phosphoserine and of 3-hydroxy-2-oxo-4-phosphonooxybutanoate to phosphohydroxythreonine. This Drosophila melanogaster (Fruit fly) protein is Phosphoserine aminotransferase.